Consider the following 100-residue polypeptide: Small ribosomal subunit protein uS14c (100 aa).

Belongs to the universal ribosomal protein uS14 family. As to quaternary structure, part of the 30S ribosomal subunit.

The protein localises to the plastid. Its subcellular location is the chloroplast. Its function is as follows. Binds 16S rRNA, required for the assembly of 30S particles. This is Small ribosomal subunit protein uS14c from Aethionema cordifolium (Lebanon stonecress).